The primary structure comprises 376 residues: Actin-like protein 53D (376 aa).

The tract at residues 1–40 (MSSEVDSNSHHAAVVIDNGSGVCKAGFSPEDTPRAVFPSI) is necessary and sufficient for recruitment to the fusome and actin cones of spermatocyte cysts.

It belongs to the actin family. ARP1 subfamily. As to expression, high expression in males whereas expression in females is very low. In adult males, highest levels of expression are in the testis. In adult females, expressed only in the ovaries at very low levels. In larvae, highly expressed in the imaginal disk whereas in prepupae and pupae modest levels of expression occur in the fat body.

The protein resides in the cytoplasm. Its subcellular location is the cytoskeleton. In terms of biological role, required for optimal embryo development, particularly under heat stress conditions. Also appears to have a role in negatively regulating spermatocyte cyst development. Under heat stress conditions, required for the correct organization and migration of nuclei during early embryogenesis, and therefore possibly functions by regulating embryonic actin networks during the heat stress response. This chain is Actin-like protein 53D, found in Drosophila melanogaster (Fruit fly).